A 143-amino-acid polypeptide reads, in one-letter code: FAD synthase (143 aa).

ATP contacts are provided by residues 13 to 14, 18 to 21, and Asp-96; these read TF and HPGH.

Belongs to the archaeal FAD synthase family. Homodimer. A divalent metal cation serves as cofactor.

It carries out the reaction FMN + ATP + H(+) = FAD + diphosphate. It participates in cofactor biosynthesis; FAD biosynthesis; FAD from FMN: step 1/1. Its function is as follows. Catalyzes the transfer of the AMP portion of ATP to flavin mononucleotide (FMN) to produce flavin adenine dinucleotide (FAD) coenzyme. This is FAD synthase from Methanothrix thermoacetophila (strain DSM 6194 / JCM 14653 / NBRC 101360 / PT) (Methanosaeta thermophila).